The primary structure comprises 251 residues: L,D-transpeptidase 1 (251 aa).

An N-terminal signal peptide occupies residues 1-28 (MRRVVRYLSVVVAITLMLTAESVSIATA). Residues 125-250 (LIGVASISAH…VTVGDPIEVV (126 aa)) enclose the L,D-TPase catalytic domain. Substrate-binding positions include Tyr-190 and 203-204 (SG). His-208 (proton donor/acceptor) is an active-site residue. Cys-226 (nucleophile) is an active-site residue. Asn-228 serves as a coordination point for substrate.

As to quaternary structure, monomer.

Its subcellular location is the periplasm. Its pathway is cell wall biogenesis; peptidoglycan biosynthesis. Is irreversibly inactivated by the beta-lactams carbapenems via the formation of a covalent adduct resulting from acylation of the catalytic Cys. In terms of biological role, generates 3-&gt;3 cross-links in peptidoglycan, catalyzing the cleavage of the mDap(3)-D-Ala(4) bond of a tetrapeptide donor stem and the formation of a bond between the carbonyl of mDap(3) of the donor stem and the side chain of mDap(3) of the acceptor stem. Is specific for donor substrates containing a stem tetrapeptide since it cannot use pentapeptide stems. This Mycobacterium tuberculosis (strain CDC 1551 / Oshkosh) protein is L,D-transpeptidase 1 (ldtA).